We begin with the raw amino-acid sequence, 419 residues long: uncharacterized protein (419 aa).

This is an uncharacterized protein from Connochaetes taurinus (Blue wildebeest).